The following is a 466-amino-acid chain: 3-isopropylmalate dehydratase large subunit (466 aa).

Positions 347, 407, and 410 each coordinate [4Fe-4S] cluster.

Belongs to the aconitase/IPM isomerase family. LeuC type 1 subfamily. In terms of assembly, heterodimer of LeuC and LeuD. Requires [4Fe-4S] cluster as cofactor.

It catalyses the reaction (2R,3S)-3-isopropylmalate = (2S)-2-isopropylmalate. The protein operates within amino-acid biosynthesis; L-leucine biosynthesis; L-leucine from 3-methyl-2-oxobutanoate: step 2/4. In terms of biological role, catalyzes the isomerization between 2-isopropylmalate and 3-isopropylmalate, via the formation of 2-isopropylmaleate. The protein is 3-isopropylmalate dehydratase large subunit of Citrobacter koseri (strain ATCC BAA-895 / CDC 4225-83 / SGSC4696).